The chain runs to 137 residues: Prefoldin subunit alpha (137 aa).

It belongs to the prefoldin subunit alpha family. As to quaternary structure, heterohexamer of two alpha and four beta subunits.

Its subcellular location is the cytoplasm. Molecular chaperone capable of stabilizing a range of proteins. Seems to fulfill an ATP-independent, HSP70-like function in archaeal de novo protein folding. The polypeptide is Prefoldin subunit alpha (pfdA) (Archaeoglobus fulgidus (strain ATCC 49558 / DSM 4304 / JCM 9628 / NBRC 100126 / VC-16)).